The primary structure comprises 493 residues: Keratin, type II cuticular Hb3 (493 aa).

Positions 1 to 111 (MTCGFSTVGS…PNAQCVKQEE (111 aa)) are head. Residues 111-422 (EKEQIKCLNN…RLLEGEEQRL (312 aa)) enclose the IF rod domain. The coil 1A stretch occupies residues 112-146 (KEQIKCLNNRFAAFIDKVRFLEQQNKLLETKLQFY). The segment at 147-156 (QNRQCCESNL) is linker 1. Residues 157 to 257 (EPLFEGYIET…YEEEIRVLQA (101 aa)) form a coil 1B region. A Glycyl lysine isopeptide (Lys-Gly) (interchain with G-Cter in SUMO1) cross-link involves residue Lys-217. A linker 12 region spans residues 258–274 (NISDTSVIVKMDNSRGL). A coil 2 region spans residues 275–418 (NMDNIVAEIK…ATYRRLLEGE (144 aa)). The tail stretch occupies residues 419–493 (EQRLCEGVGA…GGGSCSLGRC (75 aa)).

The protein belongs to the intermediate filament family. Heterotetramer of two type I and two type II keratins.

This is Keratin, type II cuticular Hb3 from Bos taurus (Bovine).